Reading from the N-terminus, the 198-residue chain is Undecaprenyl phosphate transporter A (198 aa).

The next 5 helical transmembrane spans lie at 15 to 35 (MGYA…EIVL), 47 to 67 (IGFI…QIFI), 107 to 127 (VVFS…PAGI), 135 to 155 (FVVL…YLGI), and 169 to 189 (GTYT…YFVI).

It belongs to the DedA family.

The protein localises to the cell membrane. Its function is as follows. Flippase that catalyzes the transport of undecaprenyl phosphate (UndP) across the cytoplasmic membrane, from the external side to the cytoplasmic side. Is involved in UndP recycling during peptidoglycan synthesis. This is Undecaprenyl phosphate transporter A from Bacillus subtilis (strain 168).